Consider the following 489-residue polypeptide: 6-phosphogluconate dehydrogenase, decarboxylating 1 (489 aa).

NADP(+)-binding positions include 9–14 (GLAVMG) and 32–34 (NRT). Phosphoserine is present on Ser50. NADP(+) is bound by residues 74 to 76 (VKA) and Asn102. Substrate contacts are provided by residues Asn102 and 128–130 (SGG). Residue Lys182 is the Proton acceptor of the active site. 185 to 186 (HN) contributes to the substrate binding site. Glu189 serves as the catalytic Proton donor. Residues Tyr190, Lys259, Arg286, Arg446, and His452 each contribute to the substrate site.

The protein belongs to the 6-phosphogluconate dehydrogenase family. As to quaternary structure, homodimer.

The protein localises to the cytoplasm. The catalysed reaction is 6-phospho-D-gluconate + NADP(+) = D-ribulose 5-phosphate + CO2 + NADPH. The protein operates within carbohydrate degradation; pentose phosphate pathway; D-ribulose 5-phosphate from D-glucose 6-phosphate (oxidative stage): step 3/3. Functionally, catalyzes the oxidative decarboxylation of 6-phosphogluconate to ribulose 5-phosphate and CO(2), with concomitant reduction of NADP to NADPH. The sequence is that of 6-phosphogluconate dehydrogenase, decarboxylating 1 (GND1) from Saccharomyces cerevisiae (strain ATCC 204508 / S288c) (Baker's yeast).